The primary structure comprises 1072 residues: DNA-directed RNA polymerase subunit beta (1072 aa).

This sequence belongs to the RNA polymerase beta chain family. In plastids the minimal PEP RNA polymerase catalytic core is composed of four subunits: alpha, beta, beta', and beta''. When a (nuclear-encoded) sigma factor is associated with the core the holoenzyme is formed, which can initiate transcription.

The protein localises to the plastid. The protein resides in the chloroplast. It carries out the reaction RNA(n) + a ribonucleoside 5'-triphosphate = RNA(n+1) + diphosphate. DNA-dependent RNA polymerase catalyzes the transcription of DNA into RNA using the four ribonucleoside triphosphates as substrates. The sequence is that of DNA-directed RNA polymerase subunit beta from Eucalyptus globulus subsp. globulus (Tasmanian blue gum).